Reading from the N-terminus, the 1353-residue chain is Xanthine dehydrogenase 2 (1353 aa).

Residues 7–93 form the 2Fe-2S ferredoxin-type domain; it reads MEAIMYVNGV…GMHVISIEGV (87 aa). Residues cysteine 45, cysteine 50, cysteine 53, cysteine 75, cysteine 115, cysteine 118, cysteine 151, and cysteine 153 each coordinate [2Fe-2S] cluster. The FAD-binding PCMH-type domain occupies 249 to 434; sequence GGNEGITWYR…LSVFLPWTRP (186 aa). Residues 277-284, phenylalanine 357, 367-371, aspartate 380, leucine 424, and lysine 442 contribute to the FAD site; these read LLVGNTEV and CIGGN. 2 residues coordinate Mo-molybdopterin: glutamine 788 and phenylalanine 819. Residues glutamate 823 and arginine 901 each contribute to the substrate site. Arginine 933 contributes to the Mo-molybdopterin binding site. Residues phenylalanine 935 and threonine 1031 each coordinate substrate. Alanine 1100 is a binding site for Mo-molybdopterin. The active-site Proton acceptor is glutamate 1289.

This sequence belongs to the xanthine dehydrogenase family. In terms of assembly, homodimer. [2Fe-2S] cluster is required as a cofactor. It depends on FAD as a cofactor. Requires Mo-molybdopterin as cofactor. In terms of tissue distribution, expressed in roots, leaves, stems, flowers and siliques.

It carries out the reaction xanthine + NAD(+) + H2O = urate + NADH + H(+). The catalysed reaction is hypoxanthine + NAD(+) + H2O = xanthine + NADH + H(+). Functionally, key enzyme involved in purine catabolism. Catalyzes the oxidation of hypoxanthine to xanthine and the oxidation of xanthine to urate. Regulates the level of ureides and plays a role during plant growth and development and senescence. This is Xanthine dehydrogenase 2 (XDH2) from Arabidopsis thaliana (Mouse-ear cress).